A 294-amino-acid chain; its full sequence is Cytidine deaminase (294 aa).

CMP/dCMP-type deaminase domains follow at residues 48–168 (DEDA…FGPK) and 186–294 (LTGD…TLLA). A substrate-binding site is contributed by 89-91 (NME). Residue His-102 participates in Zn(2+) binding. Glu-104 serves as the catalytic Proton donor. Residues Cys-129 and Cys-132 each coordinate Zn(2+).

Belongs to the cytidine and deoxycytidylate deaminase family. Homodimer. Requires Zn(2+) as cofactor.

It carries out the reaction cytidine + H2O + H(+) = uridine + NH4(+). It catalyses the reaction 2'-deoxycytidine + H2O + H(+) = 2'-deoxyuridine + NH4(+). Functionally, this enzyme scavenges exogenous and endogenous cytidine and 2'-deoxycytidine for UMP synthesis. The chain is Cytidine deaminase from Enterobacter sp. (strain 638).